Reading from the N-terminus, the 642-residue chain is Threonine--tRNA ligase (642 aa).

Residues 1–61 enclose the TGS domain; the sequence is MPVITLPDGS…ENDAQLSIIT (61 aa). Positions 243 to 534 are catalytic; that stretch reads DHRKIGKQLD…LTEEFAGFFP (292 aa). An N6-acetyllysine modification is found at lysine 286. Residues cysteine 334, histidine 385, and histidine 511 each coordinate Zn(2+).

Belongs to the class-II aminoacyl-tRNA synthetase family. Homodimer. Requires Zn(2+) as cofactor.

It is found in the cytoplasm. The enzyme catalyses tRNA(Thr) + L-threonine + ATP = L-threonyl-tRNA(Thr) + AMP + diphosphate + H(+). Functionally, catalyzes the attachment of threonine to tRNA(Thr) in a two-step reaction: L-threonine is first activated by ATP to form Thr-AMP and then transferred to the acceptor end of tRNA(Thr). Also edits incorrectly charged L-seryl-tRNA(Thr). This Shigella boydii serotype 18 (strain CDC 3083-94 / BS512) protein is Threonine--tRNA ligase.